The following is a 323-amino-acid chain: Down-regulator of invasive growth 2 (323 aa).

The span at 1-10 shows a compositional bias: acidic residues; sequence MNKEEQEDPQ. Residues 1 to 26 form a disordered region; it reads MNKEEQEDPQQEQISTVQENDPRNLQ. A compositionally biased stretch (polar residues) spans 11-26; that stretch reads QEQISTVQENDPRNLQ. At Ser34 the chain carries Phosphoserine. Residues 67–87 are disordered; it reads LSQKEEDHSGKPPTITTSPAE. Phosphoserine is present on residues Ser225, Ser266, and Ser270.

In terms of assembly, forms a complex with DIG1, STE12 and either FUS3 or KSS1. The interaction of FUS3 with STE12 depends on the presence of both DIG1 and DIG2. STE12 is lost from FUS3/DIG1/DIG2 complex after pheromone treatment. DIG1 and DIG2 have also been reported to interact with CLN1 and CLN2. Post-translationally, phosphorylated by FUS3 and KSS1, in a pheromone-stimulated manner.

It is found in the nucleus. Functionally, DIG2 and DIG1 are negative regulators of the filamentation and pheromone induced mating program. DIG1 and DIG2 inhibit the transcriptional activity of STE12 by direct protein-protein interaction. DIG2 binds to the DNA binding domain (DBD) of STE12 and thus inhibits transcription when overexpressed. The chain is Down-regulator of invasive growth 2 (DIG2) from Saccharomyces cerevisiae (strain ATCC 204508 / S288c) (Baker's yeast).